Reading from the N-terminus, the 231-residue chain is Probable septum site-determining protein MinC (231 aa).

A disordered region spans residues 102 to 125 (KEKAPRPAPAPQAPTQNTTPVTKT). Low complexity predominate over residues 114-123 (APTQNTTPVT).

This sequence belongs to the MinC family. In terms of assembly, interacts with MinD and FtsZ.

In terms of biological role, cell division inhibitor that blocks the formation of polar Z ring septums. Rapidly oscillates between the poles of the cell to destabilize FtsZ filaments that have formed before they mature into polar Z rings. Prevents FtsZ polymerization. The chain is Probable septum site-determining protein MinC from Escherichia coli O45:K1 (strain S88 / ExPEC).